The sequence spans 315 residues: Protoheme IX farnesyltransferase 1 (315 aa).

8 helical membrane-spanning segments follow: residues 30–50, 56–76, 106–126, 132–152, 162–182, 186–206, 249–269, and 289–309; these read PGIIISNSLAALGGFWIAWIQ, GGPGIFAAMAVAMIGTALVMA, IPPPVMILYGTCLGACGFIML, LTAVLGLLAFLLYAVVYTLWF, VGSFPGAAPPLIGYCALTGYI, AILLYAIMFLWQPPHFWAIGI, LYIDVSPFYTASALLLGAIWL, and FFYSIVYFSLLFLILMADSFI.

Belongs to the UbiA prenyltransferase family. Protoheme IX farnesyltransferase subfamily. Interacts with CtaA.

Its subcellular location is the cell membrane. The catalysed reaction is heme b + (2E,6E)-farnesyl diphosphate + H2O = Fe(II)-heme o + diphosphate. Its pathway is porphyrin-containing compound metabolism; heme O biosynthesis; heme O from protoheme: step 1/1. Converts heme B (protoheme IX) to heme O by substitution of the vinyl group on carbon 2 of heme B porphyrin ring with a hydroxyethyl farnesyl side group. The polypeptide is Protoheme IX farnesyltransferase 1 (Bacillus velezensis (strain DSM 23117 / BGSC 10A6 / LMG 26770 / FZB42) (Bacillus amyloliquefaciens subsp. plantarum)).